The chain runs to 471 residues: RuvB-like protein 2 (471 aa).

75-82 (GPPSTGKT) is an ATP binding site.

The protein belongs to the RuvB family. Probably forms a homohexamer. Interacts with RVB1 and may form heterododecamers with RVB1. Component of the SWR1 chromatin remodeling complex composed of at least ACT1, ARP4, RVB1, RVB2, ARP6, YAF9, VPS71, VPS72, SWC3, SWC4, SWC5, SWC7 and SWR1, and perhaps BDF1. Component of the chromatin-remodeling INO80 complex, at least composed of ARP4, ARP5, ARP8, RVB1, RVB2, TAF14, NHP10, IES1, IES3, IES4, IES6, ACT1, IES2, IES5 and INO80. Also belongs to the R2TP complex composed of at least RVB1, RVB2, TAH1 and PIH1. Interacts with SPT15/TBP.

The protein localises to the nucleus. Its subcellular location is the nucleoplasm. The enzyme catalyses ATP + H2O = ADP + phosphate + H(+). DNA helicase which participates in several chromatin remodeling complexes, including the SWR1 and the INO80 complexes. The SWR1 complex mediates the ATP-dependent exchange of histone H2A for the H2A variant HZT1 leading to transcriptional regulation of selected genes by chromatin remodeling. The INO80 complex remodels chromatin by shifting nucleosomes. Its ability to induce transcription of some phosphate-responsive genes is modulated by inositol polyphosphates. The INO80 complex is involved in DNA repair by associating to 'Ser-129' phosphorylated H2A histones as a response to DNA damage. During transcription may recruit SPT15/TBP to the TATA-boxes of involved genes. Required for box C/D and box H/ACA snoRNA accumulation and involved in pre-rRNA processing. In Saccharomyces cerevisiae (strain ATCC 204508 / S288c) (Baker's yeast), this protein is RuvB-like protein 2 (RVB2).